A 395-amino-acid polypeptide reads, in one-letter code: ATP-dependent RNA helicase eIF4A (395 aa).

The Q motif signature appears at 22–50 (TSFDDLGLKDELLRGIYGYGFENPSSIQQ). Positions 53 to 223 (ILPVIKGNDV…GKFMRDPVRI (171 aa)) constitute a Helicase ATP-binding domain. Position 66–73 (66–73 (AQSGTGKT)) interacts with ATP. Residues 171–174 (DEAD) carry the DEAD box motif. Positions 234–395 (GIKQFYIDVE…EMPTNIADLI (162 aa)) constitute a Helicase C-terminal domain.

Belongs to the DEAD box helicase family. eIF4A subfamily. As to quaternary structure, component of the eIF4F complex, which composition varies with external and internal environmental conditions. It is composed of at least eIF4A, eIF4E and eIF4G.

It localises to the cytoplasm. The catalysed reaction is ATP + H2O = ADP + phosphate + H(+). In terms of biological role, ATP-dependent RNA helicase which is a subunit of the eIF4F complex involved in cap recognition and is required for mRNA binding to ribosome. In the current model of translation initiation, eIF4A unwinds RNA secondary structures in the 5'-UTR of mRNAs which is necessary to allow efficient binding of the small ribosomal subunit, and subsequent scanning for the initiator codon. This chain is ATP-dependent RNA helicase eIF4A (TIF1), found in Yarrowia lipolytica (strain CLIB 122 / E 150) (Yeast).